Here is a 335-residue protein sequence, read N- to C-terminus: Antigen-presenting glycoprotein CD1d (335 aa).

A signal peptide spans 1–17; that stretch reads MGCLLFLVLLEFQKIWG. The Extracellular segment spans residues 18–304; the sequence is SFEAPQTSFP…WDGKRVSRGL (287 aa). 2 N-linked (GlcNAc...) asparagine glycosylation sites follow: asparagine 38 and asparagine 60. A D-galactosylceramide is bound at residue aspartate 98. Cystine bridges form between cysteine 120–cysteine 184 and cysteine 224–cysteine 279. Asparagine 126 carries an N-linked (GlcNAc...) asparagine glycan. Residues aspartate 169, 169 to 172, and threonine 172 contribute to the a D-galactosylceramide site; that span reads DQGT. The Ig-like domain occupies 185-295; sequence PELVKGLMQT…LGDQDIILYW (111 aa). Residues 305 to 325 form a helical membrane-spanning segment; sequence IVVLVILVFVLLFVGGLVFWF. Over 326 to 335 the chain is Cytoplasmic; sequence RKHRRYQDIS. Residues 331 to 334 carry the Internalization signal motif; it reads YQDI.

In terms of assembly, heterodimer with B2M (beta-2-microglobulin). Interacts with MHC II and CD74. Expressed on cortical thymocytes, on certain T-cell leukemias, and in various other tissues.

It is found in the cell membrane. Its subcellular location is the basolateral cell membrane. It localises to the endosome membrane. The protein localises to the lysosome membrane. The protein resides in the endoplasmic reticulum membrane. Its function is as follows. Antigen-presenting protein that binds self and non-self glycolipids and presents them to T-cell receptors on natural killer T-cells. In Ovis aries (Sheep), this protein is Antigen-presenting glycoprotein CD1d (CD1D).